The chain runs to 170 residues: Urease accessory protein UreE (170 aa).

Belongs to the UreE family.

Its subcellular location is the cytoplasm. In terms of biological role, involved in urease metallocenter assembly. Binds nickel. Probably functions as a nickel donor during metallocenter assembly. In Helicobacter pylori (strain J99 / ATCC 700824) (Campylobacter pylori J99), this protein is Urease accessory protein UreE.